The sequence spans 551 residues: Rqc2 homolog RqcH (551 aa).

A required for fibronectin binding region spans residues 363–551 (YQKLKEAVKY…SKKIASMKKS (189 aa)).

The protein belongs to the NEMF family. Associates with stalled 50S ribosomal subunits, binds to RqcP. Interacts with human fibronectin.

Its subcellular location is the cell surface. It localises to the cytoplasm. Functionally, key component of the ribosome quality control system (RQC), a ribosome-associated complex that mediates the extraction of incompletely synthesized nascent chains from stalled ribosomes and their subsequent degradation. RqcH recruits Ala-charged tRNA, and with RqcP directs the elongation of stalled nascent chains on 50S ribosomal subunits, leading to non-templated C-terminal alanine extensions (Ala tail). The Ala tail promotes nascent chain degradation. May add between 1 and at least 8 Ala residues. Binds to stalled 50S ribosomal subunits. Its function is as follows. Recombinant protein binds to immobilized human fibronectin; binding is saturable and competed by heparin. Recombinant protein inhibits binding of whole cells to fibronectin. The protein is Rqc2 homolog RqcH of Streptococcus pneumoniae (strain ATCC BAA-255 / R6).